The chain runs to 156 residues: Small ribosomal subunit protein uS7c (156 aa).

This sequence belongs to the universal ribosomal protein uS7 family. As to quaternary structure, part of the 30S ribosomal subunit.

The protein localises to the plastid. The protein resides in the chloroplast. Functionally, one of the primary rRNA binding proteins, it binds directly to 16S rRNA where it nucleates assembly of the head domain of the 30S subunit. The polypeptide is Small ribosomal subunit protein uS7c (rps7) (Ostreococcus tauri).